A 310-amino-acid chain; its full sequence is Ferredoxin--NADP reductase (310 aa).

The FAD site is built by D26, Q34, Y39, V78, F108, D268, and T308.

This sequence belongs to the ferredoxin--NADP reductase type 2 family. In terms of assembly, homodimer. It depends on FAD as a cofactor.

It catalyses the reaction 2 reduced [2Fe-2S]-[ferredoxin] + NADP(+) + H(+) = 2 oxidized [2Fe-2S]-[ferredoxin] + NADPH. The chain is Ferredoxin--NADP reductase from Lactobacillus helveticus (strain DPC 4571).